Here is a 210-residue protein sequence, read N- to C-terminus: Orotate phosphoribosyltransferase (210 aa).

Lysine 26 serves as a coordination point for 5-phospho-alpha-D-ribose 1-diphosphate. An orotate-binding site is contributed by 34–35; that stretch reads FF. Residues 72–73, arginine 98, lysine 99, lysine 102, histidine 104, and 123–131 each bind 5-phospho-alpha-D-ribose 1-diphosphate; these read YK and DDVITAGTA. Threonine 127 and arginine 155 together coordinate orotate.

The protein belongs to the purine/pyrimidine phosphoribosyltransferase family. PyrE subfamily. In terms of assembly, homodimer. Mg(2+) is required as a cofactor.

It catalyses the reaction orotidine 5'-phosphate + diphosphate = orotate + 5-phospho-alpha-D-ribose 1-diphosphate. It participates in pyrimidine metabolism; UMP biosynthesis via de novo pathway; UMP from orotate: step 1/2. Catalyzes the transfer of a ribosyl phosphate group from 5-phosphoribose 1-diphosphate to orotate, leading to the formation of orotidine monophosphate (OMP). This chain is Orotate phosphoribosyltransferase, found in Legionella pneumophila (strain Paris).